The chain runs to 563 residues: MDNGVETPQGQKTQPINLPPDRKRLRKHDGLGKGVKRKLFAEDSSPLKKQIPACSDMETLSSPVKFGCKSRSASALDESFGKCKHETACDCSAIEELLCHESLLDSPMKLSNAHTIFSSDKWKLELEKIIASKQIFLDMSENVELVAYGETLCNLRIFEKISSPFLFDVQSEERSYSVVYVPHNKELCGQFCQPEKTMARVLGVGAYGKVFDLDKVAIKTANEDESVISAFIAGVIRAKSGADLLSHDCVINNLLISNSVCMDHKVSLSRTYDVDLYKFEDWDVRNVMNYYSVFCKLADAVRFLNLKCRINHFDISPMNIFINHKKEIIFDAVLADYSLSEIHPEYNGTCAIAKEYDRNLQLVPISRNKFCDMFNPGFRPLVANAMILVNVCEAFDGENNPLRHCNLDLCAFAQVVLLCVLRMTDKRGCREAQLYYEKRLFALANEACRLNPLRYPFAYRDACCKVLAEHVVLLGLLFYRDVVDIYEKIYDFLDERGEFGLRDLFEATFLNNSKLTRRQPIRGGLASLQSSEYGEKLLHDLRALFLITSSADLDKDTSSLFQM.

Polar residues predominate over residues 1–16; it reads MDNGVETPQGQKTQPI. A disordered region spans residues 1–33; sequence MDNGVETPQGQKTQPINLPPDRKRLRKHDGLGK. Residues 202-210 and Lys-219 each bind ATP; that span reads LGVGAYGKV. Catalysis depends on Asp-314, which acts as the Proton acceptor.

Belongs to the protein kinase superfamily. Tyr protein kinase family. HCMV ganciclovir subfamily.

In terms of biological role, phosphorylates the antiviral nucleoside analog ganciclovir. In Human herpesvirus 6B (strain Z29) (HHV-6 variant B), this protein is Probable ganciclovir kinase (U69).